The sequence spans 305 residues: UDP-3-O-acyl-N-acetylglucosamine deacetylase (305 aa).

3 residues coordinate Zn(2+): His79, His238, and Asp242. The active-site Proton donor is the His265.

The protein belongs to the LpxC family. Zn(2+) is required as a cofactor.

It carries out the reaction a UDP-3-O-[(3R)-3-hydroxyacyl]-N-acetyl-alpha-D-glucosamine + H2O = a UDP-3-O-[(3R)-3-hydroxyacyl]-alpha-D-glucosamine + acetate. It participates in glycolipid biosynthesis; lipid IV(A) biosynthesis; lipid IV(A) from (3R)-3-hydroxytetradecanoyl-[acyl-carrier-protein] and UDP-N-acetyl-alpha-D-glucosamine: step 2/6. Catalyzes the hydrolysis of UDP-3-O-myristoyl-N-acetylglucosamine to form UDP-3-O-myristoylglucosamine and acetate, the committed step in lipid A biosynthesis. This Vibrio campbellii (strain ATCC BAA-1116) protein is UDP-3-O-acyl-N-acetylglucosamine deacetylase.